The following is a 102-amino-acid chain: Small ribosomal subunit protein bS20 (102 aa).

The protein belongs to the bacterial ribosomal protein bS20 family.

Binds directly to 16S ribosomal RNA. The polypeptide is Small ribosomal subunit protein bS20 (Gloeobacter violaceus (strain ATCC 29082 / PCC 7421)).